The chain runs to 136 residues: Ubiquinol-cytochrome-c reductase complex assembly factor 2 (136 aa).

The transit peptide at 1 to 13 (MAALRYRRFLKLC) directs the protein to the mitochondrion.

In terms of assembly, interacts with UQCC1.

The protein localises to the mitochondrion matrix. Its subcellular location is the mitochondrion nucleoid. It localises to the mitochondrion. It is found in the mitochondrion intermembrane space. The protein resides in the mitochondrion inner membrane. Functionally, required for the assembly of the ubiquinol-cytochrome c reductase complex (mitochondrial respiratory chain complex III or cytochrome b-c1 complex). Plays a role in the modulation of respiratory chain activities such as oxygen consumption and ATP production and via its modulation of the respiratory chain activity can regulate skeletal muscle differentiation and insulin secretion by pancreatic beta-cells. Involved in cytochrome b translation and/or stability. This Rattus norvegicus (Rat) protein is Ubiquinol-cytochrome-c reductase complex assembly factor 2 (Uqcc2).